The sequence spans 1044 residues: DEMETER-like protein 3 (1044 aa).

The span at Met1–Thr15 shows a compositional bias: polar residues. Residues Met1–Leu107 form a disordered region. Positions Lys16–His30 are enriched in basic and acidic residues. The span at Thr38 to Ile53 shows a compositional bias: basic residues. Over residues Lys54–Ser66 the composition is skewed to basic and acidic residues. Positions Gly71–Arg89 are enriched in basic residues. Positions Lys348–Pro445 are DEMETER. The [4Fe-4S] cluster site is built by Cys678, Cys685, Cys688, and Cys694. Positions Val1024–Ile1044 are disordered.

This sequence belongs to the DNA glycosylase family. DEMETER subfamily. Requires [4Fe-4S] cluster as cofactor.

Its subcellular location is the nucleus. In terms of biological role, potential transcriptional activator that may act by nicking the target promoter. Catalyzes the release of 5-methylcytosine (5-meC) from DNA by a glycosylase/lyase mechanism. This chain is DEMETER-like protein 3 (DML3), found in Arabidopsis thaliana (Mouse-ear cress).